The chain runs to 203 residues: Small ribosomal subunit protein uS7A (203 aa).

This sequence belongs to the universal ribosomal protein uS7 family. Component of the small ribosomal subunit (SSU). Mature yeast ribosomes consist of a small (40S) and a large (60S) subunit. The 40S small subunit contains 1 molecule of ribosomal RNA (18S rRNA) and at least 33 different proteins. The large 60S subunit contains 3 rRNA molecules (25S, 5.8S and 5S rRNA) and at least 46 different proteins.

It localises to the cytoplasm. The protein resides in the nucleus. Its subcellular location is the nucleolus. Component of the ribosome, a large ribonucleoprotein complex responsible for the synthesis of proteins in the cell. The small ribosomal subunit (SSU) binds messenger RNAs (mRNAs) and translates the encoded message by selecting cognate aminoacyl-transfer RNA (tRNA) molecules. The large subunit (LSU) contains the ribosomal catalytic site termed the peptidyl transferase center (PTC), which catalyzes the formation of peptide bonds, thereby polymerizing the amino acids delivered by tRNAs into a polypeptide chain. The nascent polypeptides leave the ribosome through a tunnel in the LSU and interact with protein factors that function in enzymatic processing, targeting, and the membrane insertion of nascent chains at the exit of the ribosomal tunnel. This is Small ribosomal subunit protein uS7A (rps5) from Schizosaccharomyces pombe (strain 972 / ATCC 24843) (Fission yeast).